Consider the following 178-residue polypeptide: Caveolin-1 (178 aa).

S2 carries the post-translational modification N-acetylserine. S2 carries the post-translational modification Phosphoserine. The tract at residues 2-94 (SGGKYVDSEG…WKASFTTFTV (93 aa)) is required for homooligomerization. Residues 2–104 (SGGKYVDSEG…TKYWFYRLLS (103 aa)) are Cytoplasmic-facing. K5 carries the post-translational modification N6-acetyllysine; alternate. A Glycyl lysine isopeptide (Lys-Gly) (interchain with G-Cter in ubiquitin); alternate cross-link involves residue K5. Y6 bears the Phosphotyrosine mark. The residue at position 9 (S9) is a Phosphoserine. At Y14 the chain carries Phosphotyrosine; by ABL1. Y25 carries the post-translational modification Phosphotyrosine. Glycyl lysine isopeptide (Lys-Gly) (interchain with G-Cter in ubiquitin) cross-links involve residues K26, K30, K39, K47, and K57. The tract at residues 82 to 94 (DGIWKASFTTFTV) is interaction with CAVIN3. Positions 105 to 125 (ALFGIPMALIWGIYFAILSFL) form an intramembrane region, helical. The Cytoplasmic portion of the chain corresponds to 126–178 (HIWAVVPCIKSFLIEIQCISRVYSIYVHTFCDPLFEAIGKIFSNIRINTQKEI). The interval 131-142 (VPCIKSFLIEIQ) is interacts with SPRY1, SPRY2, SPRY3 and SPRY4. S-palmitoyl cysteine attachment occurs at residues C133, C143, and C156. Residues 149 to 160 (SIYVHTFCDPLF) form an interacts with SPRY1, SPRY2, and SPRY4 region. The interval 167 to 178 (FSNIRINTQKEI) is interacts with SPRY1, SPRY2, SPRY3 and SPRY4.

It belongs to the caveolin family. As to quaternary structure, homooligomer. Interacts with GLIPR2. Interacts with NOSTRIN. Interacts with SNAP25 and STX1A. Interacts (via the N-terminus) with DPP4; the interaction is direct. Interacts with CTNNB1, CDH1 and JUP. Interacts with PACSIN2; this interaction induces membrane tubulation. Interacts with SLC7A9. Interacts with BMX and BTK. Interacts with TGFBR1. Interacts with CAVIN3 (via leucine-zipper domain) in a cholesterol-sensitive manner. Interacts with CAVIN1. Interacts with EHD2 in a cholesterol-dependent manner. Forms a ternary complex with UBXN6 and VCP; mediates CAV1 targeting to lysosomes for degradation. Interacts with ABCG1; this interaction regulates ABCG1-mediated cholesterol efflux. Interacts with NEU3; this interaction enhances NEU3 sialidase activity within caveola. Interacts (via C-terminus) with SPRY1, SPRY2 (via C-terminus), SPRY3, and SPRY4. Interacts with IGFBP5; this interaction allows trafficking of IGFBP5 from the plasma membrane to the nucleus. Phosphorylated at Tyr-14 by ABL1 in response to oxidative stress. In terms of processing, ubiquitinated. Undergo monoubiquitination and multi- and/or polyubiquitination. Monoubiquitination of N-terminal lysines promotes integration in a ternary complex with UBXN6 and VCP which promotes oligomeric CAV1 targeting to lysosomes for degradation. Ubiquitinated by ZNRF1; leading to degradation and modulation of the TLR4-mediated immune response.

It localises to the golgi apparatus membrane. Its subcellular location is the cell membrane. It is found in the membrane. The protein resides in the caveola. The protein localises to the membrane raft. Its function is as follows. May act as a scaffolding protein within caveolar membranes. Forms a stable heterooligomeric complex with CAV2 that targets to lipid rafts and drives caveolae formation. Mediates the recruitment of CAVIN proteins (CAVIN1/2/3/4) to the caveolae. Interacts directly with G-protein alpha subunits and can functionally regulate their activity. Involved in the costimulatory signal essential for T-cell receptor (TCR)-mediated T-cell activation. Its binding to DPP4 induces T-cell proliferation and NF-kappa-B activation in a T-cell receptor/CD3-dependent manner. Recruits CTNNB1 to caveolar membranes and may regulate CTNNB1-mediated signaling through the Wnt pathway. Negatively regulates TGFB1-mediated activation of SMAD2/3 by mediating the internalization of TGFBR1 from membrane rafts leading to its subsequent degradation. Binds 20(S)-hydroxycholesterol (20(S)-OHC). This Bos taurus (Bovine) protein is Caveolin-1 (CAV1).